The primary structure comprises 137 residues: ATP synthase epsilon chain, chloroplastic (137 aa).

This sequence belongs to the ATPase epsilon chain family. As to quaternary structure, F-type ATPases have 2 components, CF(1) - the catalytic core - and CF(0) - the membrane proton channel. CF(1) has five subunits: alpha(3), beta(3), gamma(1), delta(1), epsilon(1). CF(0) has three main subunits: a, b and c.

The protein resides in the plastid. It is found in the chloroplast thylakoid membrane. Functionally, produces ATP from ADP in the presence of a proton gradient across the membrane. In Pinus thunbergii (Japanese black pine), this protein is ATP synthase epsilon chain, chloroplastic.